The primary structure comprises 253 residues: Ubiquinone biosynthesis O-methyltransferase (253 aa).

4 residues coordinate S-adenosyl-L-methionine: arginine 47, glycine 78, aspartate 99, and methionine 141.

This sequence belongs to the methyltransferase superfamily. UbiG/COQ3 family.

The catalysed reaction is a 3-demethylubiquinol + S-adenosyl-L-methionine = a ubiquinol + S-adenosyl-L-homocysteine + H(+). It carries out the reaction a 3-(all-trans-polyprenyl)benzene-1,2-diol + S-adenosyl-L-methionine = a 2-methoxy-6-(all-trans-polyprenyl)phenol + S-adenosyl-L-homocysteine + H(+). The protein operates within cofactor biosynthesis; ubiquinone biosynthesis. O-methyltransferase that catalyzes the 2 O-methylation steps in the ubiquinone biosynthetic pathway. This is Ubiquinone biosynthesis O-methyltransferase from Bradyrhizobium sp. (strain ORS 278).